Here is a 102-residue protein sequence, read N- to C-terminus: CRISPR-associated endoribonuclease Cas2 (102 aa).

Asp8 provides a ligand contact to Mg(2+).

Belongs to the CRISPR-associated endoribonuclease Cas2 protein family. Homodimer, forms a heterotetramer with a Cas1 homodimer. Requires Mg(2+) as cofactor.

Functionally, CRISPR (clustered regularly interspaced short palindromic repeat), is an adaptive immune system that provides protection against mobile genetic elements (viruses, transposable elements and conjugative plasmids). CRISPR clusters contain sequences complementary to antecedent mobile elements and target invading nucleic acids. CRISPR clusters are transcribed and processed into CRISPR RNA (crRNA). Functions as a ssRNA-specific endoribonuclease. Involved in the integration of spacer DNA into the CRISPR cassette. This is CRISPR-associated endoribonuclease Cas2 from Acidovorax ebreus (strain TPSY) (Diaphorobacter sp. (strain TPSY)).